The following is a 239-amino-acid chain: Ribosomal RNA small subunit methyltransferase G (239 aa).

S-adenosyl-L-methionine contacts are provided by residues Gly78, Phe83, 129 to 130, and Arg148; that span reads AE.

The protein belongs to the methyltransferase superfamily. RNA methyltransferase RsmG family.

It is found in the cytoplasm. In terms of biological role, specifically methylates the N7 position of a guanine in 16S rRNA. This Desulfitobacterium hafniense (strain Y51) protein is Ribosomal RNA small subunit methyltransferase G.